The primary structure comprises 198 residues: Large ribosomal subunit protein uL5 (198 aa).

Belongs to the universal ribosomal protein uL5 family. In terms of assembly, part of the 50S ribosomal subunit; part of the 5S rRNA/L5/L18/L25 subcomplex. Contacts the 5S rRNA and the P site tRNA. Forms a bridge to the 30S subunit in the 70S ribosome.

In terms of biological role, this is one of the proteins that bind and probably mediate the attachment of the 5S RNA into the large ribosomal subunit, where it forms part of the central protuberance. In the 70S ribosome it contacts protein S13 of the 30S subunit (bridge B1b), connecting the 2 subunits; this bridge is implicated in subunit movement. Contacts the P site tRNA; the 5S rRNA and some of its associated proteins might help stabilize positioning of ribosome-bound tRNAs. In Chlorobium phaeovibrioides (strain DSM 265 / 1930) (Prosthecochloris vibrioformis (strain DSM 265)), this protein is Large ribosomal subunit protein uL5.